The chain runs to 322 residues: Probable arabinan endo-1,5-alpha-L-arabinosidase A (322 aa).

The first 19 residues, 1–19 (MYLPTLAASASLLVGVAHG), serve as a signal peptide directing secretion. Asp-34 (proton acceptor) is an active-site residue. The Proton donor role is filled by Glu-201.

Belongs to the glycosyl hydrolase 43 family.

The protein localises to the secreted. It catalyses the reaction Endohydrolysis of (1-&gt;5)-alpha-arabinofuranosidic linkages in (1-&gt;5)-arabinans.. The protein operates within glycan metabolism; L-arabinan degradation. Its function is as follows. Endo-1,5-alpha-L-arabinanase involved in degradation of pectin. Its preferred substrate is linear 1,5-alpha-L-arabinan. This chain is Probable arabinan endo-1,5-alpha-L-arabinosidase A (abnA), found in Emericella nidulans (strain FGSC A4 / ATCC 38163 / CBS 112.46 / NRRL 194 / M139) (Aspergillus nidulans).